A 447-amino-acid polypeptide reads, in one-letter code: MTTRKYFGTDGIRGRVGQFPITPEFMLKLGWAAGMAFRKMGACRILVGKDTRISGYMFESALEAGLSAAGADVLLLGPMPTPAIAYLTRTFHAEAGIVISASHNPHYDNGIKFFSGQGTKLPDEIEMMIEELLDAPMTVAESENLGKVSRINDAAGRYIEFCKSSVPTSTDFAGLKVVIDCAHGATYKVAPNVFRELGAQVVVLSAQPDGLNINKDCGSTHMEALQAAVVAEHADMGIGFDGDGDRVLMVDHTGTIVDGDELLYIIARDLHERGRLQGGVVGTLMSNLGLELALAEQNIPFVRANVGDRYVIAELLERNWQIGGENSGHIVCFQHATTGDAIIASLQVILALRRSGISLAEARLKLRKCPQILINVRFEGSSVDPVTHPSVQEACARVTEQMAGRGRVLLRKSGTEPLVRVMVEGEDEAQVRAYAEELAKLVAEVCA.

Serine 102 functions as the Phosphoserine intermediate in the catalytic mechanism. Mg(2+)-binding residues include serine 102, aspartate 241, aspartate 243, and aspartate 245. Serine 102 is modified (phosphoserine).

It belongs to the phosphohexose mutase family. It depends on Mg(2+) as a cofactor. In terms of processing, activated by phosphorylation.

It catalyses the reaction alpha-D-glucosamine 1-phosphate = D-glucosamine 6-phosphate. Catalyzes the conversion of glucosamine-6-phosphate to glucosamine-1-phosphate. In Pseudomonas syringae pv. tomato (strain ATCC BAA-871 / DC3000), this protein is Phosphoglucosamine mutase.